The primary structure comprises 100 residues: Replication restart protein PriB (100 aa).

The region spanning 1–99 is the SSB domain; sequence MGFNNLVSLA…LRIQNIKEYK (99 aa).

This sequence belongs to the PriB family. Homodimer. Interacts with PriA and DnaT. Component of the replication restart primosome. Primosome assembly occurs via a 'hand-off' mechanism. PriA binds to replication forks, subsequently PriB then DnaT bind; DnaT then displaces ssDNA to generate the helicase loading substrate.

Involved in the restart of stalled replication forks, which reloads the replicative helicase on sites other than the origin of replication; the PriA-PriB pathway is the major replication restart pathway. During primosome assembly it facilitates complex formation between PriA and DnaT on DNA; stabilizes PriA on DNA. Stimulates the DNA unwinding activity of PriA helicase. The protein is Replication restart protein PriB of Neisseria meningitidis serogroup C (strain 053442).